A 430-amino-acid chain; its full sequence is Crotonyl-CoA carboxylase/reductase (430 aa).

This sequence belongs to the zinc-containing alcohol dehydrogenase family. Crotonyl-CoA carboxylase/reductase subfamily. As to quaternary structure, homodimer. Despite some sequence similarity to zinc-containing alcohol dehydrogenases, this enzyme does not bind any metals. serves as cofactor.

It catalyses the reaction (2S)-ethylmalonyl-CoA + NADP(+) = (2E)-butenoyl-CoA + CO2 + NADPH. It carries out the reaction (S)-methylmalonyl-CoA + NADP(+) = acryloyl-CoA + CO2 + NADPH. The enzyme catalyses butanoyl-CoA + NADP(+) = (2E)-butenoyl-CoA + NADPH + H(+). In terms of biological role, catalyzes the NADPH-dependent reductive carboxylation of crotonyl-CoA ((2E)-butenoyl-CoA) to (2S)-ethylmalonyl-CoA, in the presence of CO2. This is a key reaction in the ethylmalonyl-CoA pathway for acetyl-CoA assimilation required for R.sphaeroides growth on acetate as sole carbon source. Is also able to accept acryloyl-CoA as an alternative substrate, yielding (2S)-methylmalonyl-CoA. To a lesser extent, when CO2 is absent, the enzyme also catalyzes the reduction of crotonyl-CoA to butanoyl-CoA. The chain is Crotonyl-CoA carboxylase/reductase from Cereibacter sphaeroides (strain ATCC 17023 / DSM 158 / JCM 6121 / CCUG 31486 / LMG 2827 / NBRC 12203 / NCIMB 8253 / ATH 2.4.1.) (Rhodobacter sphaeroides).